Consider the following 620-residue polypeptide: Kelch-like protein 8 (620 aa).

The segment covering 1–10 (MASDSMSSKQ) has biased composition (polar residues). The interval 1 to 35 (MASDSMSSKQARNHITKGKRQQQHQQIKNRSSISD) is disordered. Ala-2 bears the N-acetylalanine mark. A compositionally biased stretch (basic residues) spans 11 to 22 (ARNHITKGKRQQ). The span at 23-34 (QHQQIKNRSSIS) shows a compositional bias: polar residues. One can recognise a BTB domain in the interval 67–134 (CDVTLKVGSK…VYSSRLTLTV (68 aa)). The BACK domain occupies 169–270 (CLAVRAFAES…LPVDFLMGVV (102 aa)). 6 Kelch repeats span residues 319–366 (VLFC…SVEG), 367–413 (KVYA…SLGG), 415–460 (IYAI…ALVN), 462–507 (VYAV…KLHG), 508–554 (CLYV…TVMG), and 556–601 (IFAV…VCSC).

As to quaternary structure, component of the BCR(KLHL8) E3 ubiquitin ligase complex, at least composed of CUL3, KLHL8 and RBX1. Interacts with RAPSN.

Its pathway is protein modification; protein ubiquitination. Substrate-specific adapter of a BCR (BTB-CUL3-RBX1) E3 ubiquitin ligase complex required for The BCR(KLHL8) ubiquitin ligase complex mediates ubiquitination and degradation of RAPSN. The sequence is that of Kelch-like protein 8 (KLHL8) from Homo sapiens (Human).